The chain runs to 899 residues: Protein suppressor of hairy wing (899 aa).

Disordered stretches follow at residues 1-33 (MSAQ…RTGT), 45-127 (AAVA…KKMD), and 171-206 (AKEN…AKRR). Positions 21-31 (SDGDKPKEKRT) are enriched in basic and acidic residues. The segment covering 45-55 (AAVASKGASVS) has biased composition (low complexity). 2 stretches are compositionally biased toward polar residues: residues 67–83 (KILN…STKG) and 102–111 (RSSAPASSAV). Positions 183-198 (VDEDDDDDDDDEDEGV) are enriched in acidic residues. Residues 218-240 (HVCGKCYKTFRRVKSLKKHLEFC) form a C2H2-type 1; atypical zinc finger. A C2H2-type 2 zinc finger spans residues 288 to 311 (INCPDCPKSFKTQTSYERHIFITH). Residues 318-340 (YPCSICNAKLRSGALLKLHEQQH) form a C2H2-type 3; atypical zinc finger. C2H2-type zinc fingers lie at residues 347–365 (FACK…LKCH), 379–401 (MSCK…LKQH), 412–434 (YMCH…IRTH), 440–462 (FDCD…RRYH), 468–490 (YTCT…MKRH), 496–518 (HKCN…SKTH), 522–544 (YACS…VKDH), 552–576 (FACT…AGDH), and 594–617 (TDCA…RSVH). Disordered regions lie at residues 646 to 665 (EQKE…GSLI), 702 to 734 (PLEG…VVKK), and 865 to 899 (GDED…ESEA). Residues 874-899 (ETDKGKDREADNTDTDTREDAVESEA) are compositionally biased toward basic and acidic residues.

The protein localises to the nucleus. Functionally, component of the gypsy chromatin insulator complex which is required for the function of the gypsy chromatin insulator and other endogenous chromatin insulators. Chromatin insulators are regulatory elements which establish independent domains of transcriptional activity within eukaryotic genomes. Insulators have two defining properties; they can block the communication between an enhancer and a promoter when placed between them and can also buffer transgenes from position effect variegation (PEV). Insulators are proposed to structure the chromatin fiber into independent domains of differing transcriptional potential by promoting the formation of distinct chromatin loops. This chromatin looping may involve the formation of insulator bodies, where homotypic interactions between individual subunits of the insulator complex could promote the clustering of widely spaced insulators at the nuclear periphery. Within the gypsy insulator complex, this protein binds specifically to a region of the gypsy element located 3' of the 5' long terminal repeat (LTR), and may also mediate interaction with other endogenous insulators at sites distinct from those recognized by Cp190. Cooperates with pita and cliff to recruit Cp190 and regulate insulator function at the front-ultraabdominal (Fub) boundary. This is Protein suppressor of hairy wing (su(Hw)) from Drosophila virilis (Fruit fly).